The primary structure comprises 101 residues: Iron-sulfur cluster assembly protein CyaY (101 aa).

This sequence belongs to the frataxin family.

Functionally, involved in iron-sulfur (Fe-S) cluster assembly. May act as a regulator of Fe-S biogenesis. This Actinobacillus pleuropneumoniae serotype 5b (strain L20) protein is Iron-sulfur cluster assembly protein CyaY.